Consider the following 249-residue polypeptide: Uridylate kinase (249 aa).

Residue 16 to 19 coordinates ATP; sequence KLSG. Gly-57 lines the UMP pocket. Residues Gly-58 and Arg-62 each coordinate ATP. UMP-binding positions include Asp-77 and 138-145; that span reads AGMPYFST. The ATP site is built by Asn-166, Tyr-172, and Asp-175.

It belongs to the UMP kinase family. Homohexamer.

The protein localises to the cytoplasm. The catalysed reaction is UMP + ATP = UDP + ADP. Its pathway is pyrimidine metabolism; CTP biosynthesis via de novo pathway; UDP from UMP (UMPK route): step 1/1. Inhibited by UTP. Catalyzes the reversible phosphorylation of UMP to UDP. This is Uridylate kinase from Bifidobacterium adolescentis (strain ATCC 15703 / DSM 20083 / NCTC 11814 / E194a).